A 395-amino-acid polypeptide reads, in one-letter code: Acetylornithine aminotransferase (395 aa).

Pyridoxal 5'-phosphate-binding positions include Gly117–Ala118 and Phe144. Residue Arg147 participates in N(2)-acetyl-L-ornithine binding. Asp230 to Gln233 lines the pyridoxal 5'-phosphate pocket. N6-(pyridoxal phosphate)lysine is present on Lys259. Residue Ser285 participates in N(2)-acetyl-L-ornithine binding. Thr286 is a binding site for pyridoxal 5'-phosphate.

This sequence belongs to the class-III pyridoxal-phosphate-dependent aminotransferase family. ArgD subfamily. As to quaternary structure, homodimer. Pyridoxal 5'-phosphate is required as a cofactor.

It is found in the cytoplasm. It catalyses the reaction N(2)-acetyl-L-ornithine + 2-oxoglutarate = N-acetyl-L-glutamate 5-semialdehyde + L-glutamate. It functions in the pathway amino-acid biosynthesis; L-arginine biosynthesis; N(2)-acetyl-L-ornithine from L-glutamate: step 4/4. In Methanosarcina mazei (strain ATCC BAA-159 / DSM 3647 / Goe1 / Go1 / JCM 11833 / OCM 88) (Methanosarcina frisia), this protein is Acetylornithine aminotransferase.